A 1718-amino-acid chain; its full sequence is PR domain zinc finger protein 2 (1718 aa).

The SET domain occupies 28-141 (EEVRLFPSAV…PGEELLVWYN (114 aa)). Positions 155 to 335 (ERASARSKRS…TSEETLEDCS (181 aa)) are disordered. The segment covering 159–173 (ARSKRSSPKSRKGKK) has biased composition (basic residues). A compositionally biased stretch (polar residues) spans 189-202 (QLKTSEPDFTSANM). A compositionally biased stretch (basic and acidic residues) spans 204-216 (DSAEGPKEDEEKP). The segment covering 265–297 (DLGEEEEEEEEEDEEEEEDDDDDELEDEGEEEA) has biased composition (acidic residues). Residues 294–316 (EEEASMPNENSVKEPEIRCDEKP) are retinoblastoma protein binding. A compositionally biased stretch (basic and acidic residues) spans 304–327 (SVKEPEIRCDEKPEDLLEEPKTTS). Lys347 is covalently cross-linked (Glycyl lysine isopeptide (Lys-Gly) (interchain with G-Cter in SUMO2)). 2 C2H2-type zinc fingers span residues 360–382 (FPCQ…MHIH) and 390–412 (FKCK…ERRH). A disordered region spans residues 405–457 (RRRHERRHEAGLKRKPSQTLQPSEDLADGKASGENVASKDDSSPPSLGPDCLI). Phosphoserine is present on Ser421. The C2H2-type 3 zinc-finger motif lies at 483 to 506 (HPCKYCKKVFGTHTNMRRHQRRVH). 2 disordered regions span residues 513-550 (KGVR…EGEA) and 622-660 (EDLP…DPMV). Phosphoserine is present on Ser643. Glycyl lysine isopeptide (Lys-Gly) (interchain with G-Cter in SUMO2) cross-links involve residues Lys651, Lys690, and Lys692. The interval 729–797 (TSSRFKRRTS…GRDERETVSP (69 aa)) is disordered. A compositionally biased stretch (low complexity) spans 738–748 (SSPPSSPQHSP). Residue Ser743 is modified to Phosphoserine. Residue Lys774 forms a Glycyl lysine isopeptide (Lys-Gly) (interchain with G-Cter in SUMO2) linkage. Phosphoserine occurs at positions 781, 785, and 796. Residues Lys866 and Lys879 each participate in a glycyl lysine isopeptide (Lys-Gly) (interchain with G-Cter in SUMO2) cross-link. The segment at 903 to 1083 (VENPADGTRS…SPPPLSAISS (181 aa)) is disordered. A compositionally biased stretch (low complexity) spans 951–969 (LQTPSLSSGQLPPLLIPTD). 2 short sequence motifs (SH3-binding) span residues 970–979 (PSSPPPCPPV) and 985–998 (PPPP…LPAP). Residues 970–997 (PSSPPPCPPVLTVATPPPPLLPTVPLPA) are compositionally biased toward pro residues. Positions 1018–1027 (SPLPILSPTV) are enriched in low complexity. Residues 1028–1038 (SPSPSPIPPVE) are compositionally biased toward pro residues. Positions 1028 to 1052 (SPSPSPIPPVEPLMSAASPGPPTLS) match the SH3-binding motif. Over residues 1042–1072 (SAASPGPPTLSSSSSSSSSSSSFSSSSSSSS) the composition is skewed to low complexity. 3 consecutive C2H2-type zinc fingers follow at residues 1134-1156 (FVCN…LSIH), 1162-1185 (FKCE…FLLH), and 1191-1214 (FVCS…RDLH). Glycyl lysine isopeptide (Lys-Gly) (interchain with G-Cter in SUMO2) cross-links involve residues Lys1147 and Lys1151. The disordered stretch occupies residues 1244-1265 (HMQSLPEDPLETSKEEEELNDS). Positions 1251 to 1265 (DPLETSKEEEELNDS) are enriched in acidic residues. Glycyl lysine isopeptide (Lys-Gly) (interchain with G-Cter in SUMO2) cross-links involve residues Lys1257 and Lys1281. The C2H2-type 7; atypical zinc-finger motif lies at 1333 to 1355 (IRCTKCGKGVDNMPELHKHILAC). Residues 1455–1478 (HICPYCNREFTYIGSLNKHAAFSC) form a C2H2-type 8; atypical zinc finger. 3 disordered regions span residues 1478-1576 (CPKK…LRNS), 1589-1612 (GKKP…RSLH), and 1625-1652 (KSTL…VTRS). Over residues 1486 to 1498 (PKKKVSHSSKKGG) the composition is skewed to basic residues. The segment covering 1499 to 1511 (HSSPASSDKNSNS) has biased composition (low complexity). Polar residues-rich tracts occupy residues 1525–1556 (QSMQ…SKQN) and 1599–1608 (HSAQLSSKTS). Residues 1635-1645 (DRFNIKSRERS) are compositionally biased toward basic and acidic residues.

It belongs to the class V-like SAM-binding methyltransferase superfamily. Binds to the retinoblastoma protein (RB). Interacts with GATA3. In terms of tissue distribution, highly expressed in retinoblastoma cell lines and in brain tumors. Also expressed in a number of other cell lines and in brain, heart, skeletal muscle, liver and spleen. Isoform 1 is expressed in testis at much higher level than isoform 3.

It localises to the nucleus. The enzyme catalyses L-lysyl(9)-[histone H3] + 3 S-adenosyl-L-methionine = N(6),N(6),N(6)-trimethyl-L-lysyl(9)-[histone H3] + 3 S-adenosyl-L-homocysteine + 3 H(+). Its function is as follows. S-adenosyl-L-methionine-dependent histone methyltransferase that specifically methylates 'Lys-9' of histone H3. May function as a DNA-binding transcription factor. Binds to the macrophage-specific TPA-responsive element (MTE) of the HMOX1 (heme oxygenase 1) gene and may act as a transcriptional activator of this gene. This Homo sapiens (Human) protein is PR domain zinc finger protein 2 (PRDM2).